Reading from the N-terminus, the 99-residue chain is METLTFNFPAAEPGRGRTLVGCVSSGDLEVLIEPGTAGSLQIQVVTSVNGSAARWAQLFQRLFEGRAWPAVNIDIHDFGATPGVVRLRLEQGFEEIAHD.

Serine 25 is subject to O-(phosphoribosyl dephospho-coenzyme A)serine.

Belongs to the MdcC family. Covalently binds the prosthetic group of malonate decarboxylase.

It is found in the cytoplasm. In terms of biological role, subunit of malonate decarboxylase, it is an acyl carrier protein to which acetyl and malonyl thioester residues are bound via a 2'-(5''-phosphoribosyl)-3'-dephospho-CoA prosthetic group and turn over during the catalytic mechanism. The protein is Malonate decarboxylase acyl carrier protein of Pseudomonas putida (strain GB-1).